Here is a 145-residue protein sequence, read N- to C-terminus: D-aminoacyl-tRNA deacylase (145 aa).

A Gly-cisPro motif, important for rejection of L-amino acids motif is present at residues 137–138; that stretch reads GP.

This sequence belongs to the DTD family. Homodimer.

It localises to the cytoplasm. The catalysed reaction is glycyl-tRNA(Ala) + H2O = tRNA(Ala) + glycine + H(+). It carries out the reaction a D-aminoacyl-tRNA + H2O = a tRNA + a D-alpha-amino acid + H(+). In terms of biological role, an aminoacyl-tRNA editing enzyme that deacylates mischarged D-aminoacyl-tRNAs. Also deacylates mischarged glycyl-tRNA(Ala), protecting cells against glycine mischarging by AlaRS. Acts via tRNA-based rather than protein-based catalysis; rejects L-amino acids rather than detecting D-amino acids in the active site. By recycling D-aminoacyl-tRNA to D-amino acids and free tRNA molecules, this enzyme counteracts the toxicity associated with the formation of D-aminoacyl-tRNA entities in vivo and helps enforce protein L-homochirality. The polypeptide is D-aminoacyl-tRNA deacylase (Lactobacillus delbrueckii subsp. bulgaricus (strain ATCC 11842 / DSM 20081 / BCRC 10696 / JCM 1002 / NBRC 13953 / NCIMB 11778 / NCTC 12712 / WDCM 00102 / Lb 14)).